The chain runs to 314 residues: GTPase Era (314 aa).

Residues 21–189 enclose the Era-type G domain; the sequence is KSGFVGIIGR…QNTLIEQLEP (169 aa). Residues 29–36 form a G1 region; sequence GRPNVGKS. 29-36 lines the GTP pocket; that stretch reads GRPNVGKS. The segment at 55–59 is G2; sequence QTTRN. The segment at 76–79 is G3; it reads DTPG. GTP is bound by residues 76–80 and 138–141; these read DTPGI and NKSD. A G4 region spans residues 138-141; the sequence is NKSD. Positions 168–170 are G5; it reads FSA. The 85-residue stretch at 212–296 folds into the KH type-2 domain; the sequence is IREQILQLTR…FLKLFVKVEP (85 aa).

The protein belongs to the TRAFAC class TrmE-Era-EngA-EngB-Septin-like GTPase superfamily. Era GTPase family. As to quaternary structure, monomer.

The protein localises to the cytoplasm. The protein resides in the cell inner membrane. An essential GTPase that binds both GDP and GTP, with rapid nucleotide exchange. Plays a role in 16S rRNA processing and 30S ribosomal subunit biogenesis and possibly also in cell cycle regulation and energy metabolism. The sequence is that of GTPase Era from Crocosphaera subtropica (strain ATCC 51142 / BH68) (Cyanothece sp. (strain ATCC 51142)).